We begin with the raw amino-acid sequence, 174 residues long: Trypsin inhibitor BvTI (174 aa).

2 cysteine pairs are disulfide-bonded: Cys41–Cys84 and Cys131–Cys138.

The protein belongs to the protease inhibitor I3 (leguminous Kunitz-type inhibitor) family.

The protein localises to the secreted. Inhibits bovine trypsin and chymotrypsin, and human plasmin, plasma kallikrein and factor XIIa. The polypeptide is Trypsin inhibitor BvTI (Bauhinia variegata (Purple orchid tree)).